The primary structure comprises 338 residues: Protein UL141 (338 aa).

Positions 1–25 (MCRRESLRTLPWLFWVLLSCPRLLE) are cleaved as a signal peptide. Residues 37 to 278 (DIAEKMWAEN…DTGMSPWATR (242 aa)) are Extracellular-facing. N-linked (GlcNAc...) asparagine; by host glycans are attached at residues asparagine 117, asparagine 132, and asparagine 147. The helical transmembrane segment at 279–299 (GIAAFLGFWSIFTVCFLCYLC) threads the bilayer. Over 300–338 (YLQCCGHWCPTPGRGRRGGEGYRRLPTYDSYPGVKKMKR) the chain is Cytoplasmic.

In terms of assembly, interacts with human PVR. Interacts with human TNFRSF10A and TNFRSF10B. Forms a homodimer that engages two TNFRSF10B monomers.

It is found in the host endoplasmic reticulum membrane. In terms of biological role, evasion of NK cell killing. Blocks surface expression of PVR which is a ligand for NK cell-activating receptors. Binds human PVR in the endoplasmic reticulum and prevents its maturation and transport to the cell surface. Targets also the natural killer cell activating ligand NECTIN2 for proteasome-mediated degradation. Additionally promotes intracellular retention of TNFRSF10A/TRAIL-R1 and TNFRSF10B/TRAIL-R2 and thus down-regulates their cell surface expression. The polypeptide is Protein UL141 (UL141) (Human cytomegalovirus (strain Merlin) (HHV-5)).